Consider the following 94-residue polypeptide: Large ribosomal subunit protein bL25 (94 aa).

This sequence belongs to the bacterial ribosomal protein bL25 family. In terms of assembly, part of the 50S ribosomal subunit; part of the 5S rRNA/L5/L18/L25 subcomplex. Contacts the 5S rRNA. Binds to the 5S rRNA independently of L5 and L18.

Its function is as follows. This is one of the proteins that binds to the 5S RNA in the ribosome where it forms part of the central protuberance. The polypeptide is Large ribosomal subunit protein bL25 (Escherichia coli O6:K15:H31 (strain 536 / UPEC)).